Here is a 1141-residue protein sequence, read N- to C-terminus: Putative late blight resistance protein homolog R1B-13 (1141 aa).

Residues 417–437 (DSLAFLKNQIQVIQMEFEILQ) adopt a coiled-coil conformation. An NB-ARC domain is found at 516 to 742 (TVITHTSSQL…LSIVLVADVL (227 aa)). LRR repeat units follow at residues 826 to 851 (FKFL…PYLR), 869 to 894 (LWNL…VWDM), 992 to 1016 (APNL…TVDH), 1017 to 1041 (LKHL…VSNG), and 1043 to 1068 (FPQL…AFPI).

This sequence belongs to the disease resistance NB-LRR family.

The protein localises to the cytoplasm. It localises to the membrane. Confers resistance to late blight (Phytophthora infestans) races carrying the avirulence gene Avr1. Resistance proteins guard the plant against pathogens that contain an appropriate avirulence protein via an indirect interaction with this avirulence protein. That triggers a defense system including the hypersensitive response, which restricts the pathogen growth. This chain is Putative late blight resistance protein homolog R1B-13 (R1B-13), found in Solanum demissum (Wild potato).